Consider the following 281-residue polypeptide: Lectin CaBo (281 aa).

A signal peptide spans 1-29 (MAISKKSSLYLPIFTFITMLLMVVNKVSS). D119 contacts Ca(2+). R139 is an a carbohydrate binding site. Positions 149–163 (IIKNSTTIDFNAAYN) are cleaved as a propeptide — removed in mature form. E171 and D173 together coordinate Mn(2+). The Ca(2+) site is built by D173, Y175, N177, and D182. Y175 is a binding site for a carbohydrate. Residues D182 and H187 each coordinate Mn(2+). 262 to 263 (LY) lines the a carbohydrate pocket.

It belongs to the leguminous lectin family. In terms of assembly, equilibrium between homodimer and homotetramer. In terms of processing, the mature chain consists of residues 164-281 followed by residues 30-148. Concanavalin A-like lectins of the Diocleinae subtribe undergo proteolytic processing referred to as circular permutation. The propeptide is split into an N-terminal and a C-terminal part, the gamma and beta chain, respectively. These are then religated in beta-gamma order to form the mature alpha chain. The beta and gamma chains can often be detected in cell extracts.

Its function is as follows. D-mannose-specific lectin. The protein is Lectin CaBo of Canavalia bonariensis.